Here is a 284-residue protein sequence, read N- to C-terminus: Spermidine synthase (284 aa).

Residues 6–241 (NGWFSEISEF…GSIGFILCSL (236 aa)) enclose the PABS domain. Position 37 (Gln-37) interacts with S-adenosyl 3-(methylsulfanyl)propylamine. Putrescine is bound at residue Tyr-67. Residues Gln-68, Asp-92, Glu-112, 143-144 (DG), and Asp-161 contribute to the S-adenosyl 3-(methylsulfanyl)propylamine site. The Proton acceptor role is filled by Asp-161. Residues 161–164 (DSSD) and Tyr-229 each bind putrescine.

This sequence belongs to the spermidine/spermine synthase family.

It carries out the reaction S-adenosyl 3-(methylsulfanyl)propylamine + putrescine = S-methyl-5'-thioadenosine + spermidine + H(+). It participates in amine and polyamine biosynthesis; spermidine biosynthesis; spermidine from putrescine: step 1/1. Functionally, catalyzes the production of spermidine from putrescine and decarboxylated S-adenosylmethionine (dcSAM). Has a strong preference for putrescine as substrate. This is Spermidine synthase (spsA) from Dictyostelium discoideum (Social amoeba).